Consider the following 303-residue polypeptide: Monoglyceride lipase (303 aa).

The residue at position 10 (T10) is a Phosphothreonine. Y58 carries the 3'-nitrotyrosine modification. S122 acts as the Nucleophile in catalysis. Catalysis depends on charge relay system residues D239 and H269.

The protein belongs to the AB hydrolase superfamily. Monoacylglycerol lipase family. As to quaternary structure, homodimer. In terms of tissue distribution, detected in adipose tissue, lung, liver, kidney, brain and heart.

It localises to the cytoplasm. It is found in the cytosol. The protein resides in the membrane. The enzyme catalyses Hydrolyzes glycerol monoesters of long-chain fatty acids.. It carries out the reaction a 1-acylglycerol + H2O = glycerol + a fatty acid + H(+). The catalysed reaction is a 2-acylglycerol + H2O = glycerol + a fatty acid + H(+). It catalyses the reaction 1-octanoylglycerol + H2O = octanoate + glycerol + H(+). The enzyme catalyses 2-(5Z,8Z,11Z,14Z-eicosatetraenoyl)-glycerol + H2O = glycerol + (5Z,8Z,11Z,14Z)-eicosatetraenoate + H(+). It carries out the reaction 1-decanoylglycerol + H2O = decanoate + glycerol + H(+). The catalysed reaction is 1-dodecanoylglycerol + H2O = dodecanoate + glycerol + H(+). It catalyses the reaction 1-tetradecanoylglycerol + H2O = tetradecanoate + glycerol + H(+). The enzyme catalyses 2-hexadecanoylglycerol + H2O = glycerol + hexadecanoate + H(+). It carries out the reaction 1-(9Z-octadecenoyl)-glycerol + H2O = glycerol + (9Z)-octadecenoate + H(+). The catalysed reaction is 2-(9Z-octadecenoyl)-glycerol + H2O = glycerol + (9Z)-octadecenoate + H(+). It catalyses the reaction 2-(9Z,12Z-octadecadienoyl)-glycerol + H2O = (9Z,12Z)-octadecadienoate + glycerol + H(+). The enzyme catalyses 1-(5Z,8Z,11Z,14Z-eicosatetraenoyl)-glycerol + H2O = glycerol + (5Z,8Z,11Z,14Z)-eicosatetraenoate + H(+). It carries out the reaction 1-(9Z,12Z-octadecadienoyl)-glycerol + H2O = (9Z,12Z)-octadecadienoate + glycerol + H(+). The catalysed reaction is 1-hexadecanoylglycerol + H2O = glycerol + hexadecanoate + H(+). It catalyses the reaction 1-octadecanoylglycerol + H2O = octadecanoate + glycerol + H(+). The enzyme catalyses prostaglandin E2 1-glyceryl ester + H2O = prostaglandin E2 + glycerol + H(+). It carries out the reaction prostaglandin D2-1-glycerol ester + H2O = prostaglandin D2 + glycerol + H(+). The catalysed reaction is 2-glyceryl-15-deoxy-Delta(12,14)-prostaglandin J2 + H2O = 15-deoxy-Delta(12,14)-prostaglandin J2 + glycerol + H(+). It catalyses the reaction prostaglandin F2alpha 1-glyceryl ester + H2O = prostaglandin F2alpha + glycerol + H(+). The protein operates within glycerolipid metabolism; triacylglycerol degradation. Converts monoacylglycerides to free fatty acids and glycerol. Hydrolyzes the endocannabinoid 2-arachidonoylglycerol, and thereby contributes to the regulation of endocannabinoid signaling, nociperception and perception of pain. Regulates the levels of fatty acids that serve as signaling molecules and promote cancer cell migration, invasion and tumor growth. This is Monoglyceride lipase from Homo sapiens (Human).